Consider the following 1463-residue polypeptide: Kinesin-like protein KIF15 (1463 aa).

The region spanning 18 to 354 is the Kinesin motor domain; that stretch reads AIKVFVRVRP…LKFARRAKMI (337 aa). 99 to 106 is an ATP binding site; that stretch reads GQTGSGKT. A disordered region spans residues 387–424; it reads AEGSIPRGPSESGDSQMSNSSTESNGPVSGQQSGSSSS. Over residues 398–414 the composition is skewed to polar residues; the sequence is SGDSQMSNSSTESNGPV. Low complexity predominate over residues 415-424; that stretch reads SGQQSGSSSS. Coiled coils occupy residues 436–517 and 586–646; these read SLRD…LEHN and TSTL…QGMK. Disordered stretches follow at residues 686-720, 1335-1356, and 1409-1444; these read AGEE…SGDI, FKEK…SKLT, and QLGK…EAGA. A compositionally biased stretch (polar residues) spans 701 to 715; sequence DNGSPLRSHSTNSLP. A compositionally biased stretch (basic and acidic residues) spans 1418 to 1428; it reads EQMKRDYEALQ.

Belongs to the TRAFAC class myosin-kinesin ATPase superfamily. Kinesin family. KLP2 subfamily. Homodimer.

The protein resides in the cytoplasm. Its subcellular location is the cytoskeleton. It is found in the spindle. In terms of biological role, plus-end directed kinesin-like motor enzyme involved in mitotic spindle assembly. Plays a role in positioning spindle poles during mitosis, specifically at prometaphase. The sequence is that of Kinesin-like protein KIF15 (KIF15) from Strongylocentrotus purpuratus (Purple sea urchin).